Consider the following 147-residue polypeptide: Interleukin-4 (147 aa).

An N-terminal signal peptide occupies residues 1–24; it reads MGLSPHLAVTLFCFLICTGNGIHG. C47 and C87 are oxidised to a cystine. N-linked (GlcNAc...) asparagine glycans are attached at residues N61, N90, and N117.

Belongs to the IL-4/IL-13 family.

The protein localises to the secreted. Functionally, participates in at least several B-cell activation processes as well as of other cell types. It is a costimulator of DNA-synthesis. It induces the expression of class II MHC molecules on resting B-cells. It enhances both secretion and cell surface expression of IgE and IgG1. It also regulates the expression of the low affinity Fc receptor for IgE (CD23) on both lymphocytes and monocytes. Positively regulates IL31RA expression in macrophages. Stimulates autophagy in dendritic cells by interfering with mTORC1 signaling and through the induction of RUFY4. The chain is Interleukin-4 (Il4) from Rattus norvegicus (Rat).